We begin with the raw amino-acid sequence, 429 residues long: Zinc metalloproteinase nas-17 (429 aa).

The N-terminal stretch at 1–21 is a signal peptide; sequence MFLRPSTLLLTLFLALVAGSA. An N-linked (GlcNAc...) asparagine glycan is attached at asparagine 54. One can recognise a Peptidase M12A domain in the interval 62-251; it reads RQITKIWKKW…VNINVRYSCG (190 aa). 4 cysteine pairs are disulfide-bonded: cysteine 104-cysteine 250, cysteine 125-cysteine 144, cysteine 252-cysteine 272, and cysteine 274-cysteine 283. Histidine 152 lines the Zn(2+) pocket. Glutamate 153 is a catalytic residue. Zn(2+)-binding residues include histidine 156 and histidine 162. Positions 245 to 284 constitute an EGF-like domain; that stretch reads NVRYSCGCAKSLTCENGGYTNPSNCATCVCPTGFAGTLCN.

Zn(2+) serves as cofactor.

It is found in the secreted. Functionally, metalloprotease. The chain is Zinc metalloproteinase nas-17 (nas-17) from Caenorhabditis elegans.